Here is a 492-residue protein sequence, read N- to C-terminus: Catalase (492 aa).

Active-site residues include H65 and N138. Y348 is a heme binding site.

Belongs to the catalase family. In terms of assembly, homotetramer. Requires heme as cofactor.

It localises to the cytoplasm. It is found in the cytosol. The protein localises to the peroxisome matrix. The enzyme catalyses 2 H2O2 = O2 + 2 H2O. In terms of biological role, catalyzes the degradation of hydrogen peroxide (H(2)O(2)) generated by peroxisomal oxidases to water and oxygen, thereby protecting cells from the toxic effects of hydrogen peroxide. The protein is Catalase of Soldanella alpina (Alpine snowbell).